The primary structure comprises 680 residues: NADPH--cytochrome P450 reductase (680 aa).

The Lumenal portion of the chain corresponds to 1–5 (MALDK). Residues 6-23 (LDLYVIIVLAVAVAAYFA) traverse the membrane as a helical segment. Topologically, residues 24-680 (KNQFLDQPQD…VQNRYQEDVW (657 aa)) are cytoplasmic. The 145-residue stretch at 60 to 204 (TLLLFGSQTG…DFLTWKDNVF (145 aa)) folds into the Flavodoxin-like domain. FMN is bound by residues 66–71 (SQTGTA), 117–120 (ATYG), 152–161 (LGNSTYEFYN), and Asp187. Positions 264–509 (THPYLAKISK…SGPRNKFNKF (246 aa)) constitute an FAD-binding FR-type domain. Arg283 provides a ligand contact to NADP(+). FAD is bound by residues 439–442 (RYYS), 457–459 (TAV), and 473–476 (GVVT). Residues Thr537, 599 to 600 (SR), 606 to 610 (KVYVQ), and Asp642 contribute to the NADP(+) site. Trp680 lines the FAD pocket.

Belongs to the NADPH--cytochrome P450 reductase family. This sequence in the N-terminal section; belongs to the flavodoxin family. It in the C-terminal section; belongs to the flavoprotein pyridine nucleotide cytochrome reductase family. Requires FAD as cofactor. FMN serves as cofactor.

The protein resides in the endoplasmic reticulum membrane. The protein localises to the mitochondrion outer membrane. It localises to the cell membrane. It carries out the reaction 2 oxidized [cytochrome P450] + NADPH = 2 reduced [cytochrome P450] + NADP(+) + H(+). Its function is as follows. This enzyme is required for electron transfer from NADP to cytochrome P450 in microsomes. It can also provide electron transfer to heme oxygenase and cytochrome B5. Involved in ergosterol biosynthesis. The sequence is that of NADPH--cytochrome P450 reductase from Candida maltosa (Yeast).